The primary structure comprises 341 residues: Very-long-chain 3-oxoacyl-CoA reductase (341 aa).

Residues 22 to 42 (AIYGFLLAGVAAFAAPIVSTI) form a helical membrane-spanning segment. Residues Leu-67, Asp-123, Asp-131, Asn-150, Tyr-217, Lys-221, Ile-250, and Thr-252 each coordinate NADP(+). Tyr-217 serves as the catalytic Proton donor. Lys-221 (lowers pKa of active site Tyr) is an active-site residue.

This sequence belongs to the short-chain dehydrogenases/reductases (SDR) family.

It localises to the endoplasmic reticulum membrane. The enzyme catalyses a very-long-chain (3R)-3-hydroxyacyl-CoA + NADP(+) = a very-long-chain 3-oxoacyl-CoA + NADPH + H(+). The protein operates within lipid metabolism; fatty acid biosynthesis. Its function is as follows. Component of the microsomal membrane bound fatty acid elongation system, which produces the 26-carbon very long-chain fatty acids (VLCFA) from palmitate. Catalyzes the reduction of the 3-ketoacyl-CoA intermediate that is formed in each cycle of fatty acid elongation. VLCFAs serve as precursors for ceramide and sphingolipids. In Phaeosphaeria nodorum (strain SN15 / ATCC MYA-4574 / FGSC 10173) (Glume blotch fungus), this protein is Very-long-chain 3-oxoacyl-CoA reductase.